The following is a 94-amino-acid chain: Co-chaperonin GroES (94 aa).

It belongs to the GroES chaperonin family. Heptamer of 7 subunits arranged in a ring. Interacts with the chaperonin GroEL.

Its subcellular location is the cytoplasm. In terms of biological role, together with the chaperonin GroEL, plays an essential role in assisting protein folding. The GroEL-GroES system forms a nano-cage that allows encapsulation of the non-native substrate proteins and provides a physical environment optimized to promote and accelerate protein folding. GroES binds to the apical surface of the GroEL ring, thereby capping the opening of the GroEL channel. In Orientia tsutsugamushi (Rickettsia tsutsugamushi), this protein is Co-chaperonin GroES.